Consider the following 115-residue polypeptide: NADH-ubiquinone oxidoreductase chain 3 (115 aa).

Transmembrane regions (helical) follow at residues 4 to 24, 55 to 75, and 87 to 107; these read FIVL…AFWL, FFLV…LLPL, and TMLT…YEWL.

The protein belongs to the complex I subunit 3 family. As to quaternary structure, core subunit of respiratory chain NADH dehydrogenase (Complex I) which is composed of 45 different subunits. Interacts with TMEM186. Interacts with TMEM242.

The protein resides in the mitochondrion inner membrane. The catalysed reaction is a ubiquinone + NADH + 5 H(+)(in) = a ubiquinol + NAD(+) + 4 H(+)(out). In terms of biological role, core subunit of the mitochondrial membrane respiratory chain NADH dehydrogenase (Complex I) which catalyzes electron transfer from NADH through the respiratory chain, using ubiquinone as an electron acceptor. Essential for the catalytic activity of complex I. This is NADH-ubiquinone oxidoreductase chain 3 from Reithrodontomys megalotis (Western harvest mouse).